The sequence spans 1078 residues: Transmembrane protein 132B (1078 aa).

Residues 1-903 are Extracellular-facing; the sequence is MFGAASRMDT…LTDLEIGMYA (903 aa). N-linked (GlcNAc...) asparagine glycosylation is found at Asn343, Asn366, and Asn381. The segment at 834 to 887 is disordered; sequence RGTPVGQEESTNKSTTPQSPMEGKNKLLKSGGPDAFTSFPTQGKSPDPNNPSDL. Positions 841–852 are enriched in polar residues; that stretch reads EESTNKSTTPQS. The chain crosses the membrane as a helical span at residues 904–924; sequence LLCVFCLAILVFLINCVAFAW. Residues 925–1078 lie on the Cytoplasmic side of the membrane; sequence KYRHKRFAVS…DYMESLQDQM (154 aa).

Belongs to the TMEM132 family.

It localises to the membrane. The protein is Transmembrane protein 132B (TMEM132B) of Homo sapiens (Human).